An 880-amino-acid chain; its full sequence is Tyrosine-protein kinase receptor TYRO3 (880 aa).

The N-terminal stretch at Met1–Ala30 is a signal peptide. Ig-like C2-type domains are found at residues Ala31–Ser118 and Pro129–Val209. Residues Ala31–Trp419 lie on the Extracellular side of the membrane. N-linked (GlcNAc...) asparagine glycans are attached at residues Asn53, Asn75, Asn181, Asn220, Asn230, Asn283, Asn356, and Asn370. 2 disulfide bridges follow: Cys54/Cys107 and Cys150/Cys193. Fibronectin type-III domains are found at residues Ala217–Leu310 and Ala315–His406. Residues Val420 to Leu440 traverse the membrane as a helical segment. The Cytoplasmic portion of the chain corresponds to Leu441 to Cys880. Position 456 is a phosphoserine (Ser456). A Protein kinase domain is found at Phe508–Val785. ATP is bound by residues Leu514–Val522 and Lys540. The active-site Proton acceptor is the Asp645. Tyr671, Tyr675, Tyr676, and Tyr794 each carry phosphotyrosine; by autocatalysis. The segment at Ala800 to Asn864 is disordered. Phosphoserine occurs at positions 808 and 859. The span at Ser849–Asn864 shows a compositional bias: polar residues.

It belongs to the protein kinase superfamily. Tyr protein kinase family. AXL/UFO subfamily. As to quaternary structure, monomer and homodimer. Interacts (via N-terminus) with extracellular ligands TULP1 and GAS6. Interacts with PIK3R1; this interaction increases PI3-kinase activity. Autophosphorylated. As to expression, abundant in the brain and lower levels in other tissues.

The protein localises to the cell membrane. It catalyses the reaction L-tyrosyl-[protein] + ATP = O-phospho-L-tyrosyl-[protein] + ADP + H(+). Receptor tyrosine kinase that transduces signals from the extracellular matrix into the cytoplasm by binding to several ligands including TULP1 or GAS6. Regulates many physiological processes including cell survival, migration and differentiation. Ligand binding at the cell surface induces dimerization and autophosphorylation of TYRO3 on its intracellular domain that provides docking sites for downstream signaling molecules. Following activation by ligand, interacts with PIK3R1 and thereby enhances PI3-kinase activity. Activates the AKT survival pathway, including nuclear translocation of NF-kappa-B and up-regulation of transcription of NF-kappa-B-regulated genes. TYRO3 signaling plays a role in various processes such as neuron protection from excitotoxic injury, platelet aggregation and cytoskeleton reorganization. Also plays an important role in inhibition of Toll-like receptors (TLRs)-mediated innate immune response by activating STAT1, which selectively induces production of suppressors of cytokine signaling SOCS1 and SOCS3. This is Tyrosine-protein kinase receptor TYRO3 (Tyro3) from Mus musculus (Mouse).